The following is a 172-amino-acid chain: Stellate protein CG33237 (172 aa).

Belongs to the casein kinase 2 subunit beta family. In terms of assembly, interacts in vitro with the casein kinase 2 alpha subunit (CkII-alpha). The relevance of such interaction is however unclear in vivo. Probably not expressed in wild-type flies. In males lacking the Y chromosome, it is testis-specific and constitutes the main component of star-shaped crystals.

In terms of biological role, unknown. In males lacking the Y chromosome, its strong overexpression leads to the appearance of proteinaceous star-shaped crystals in the primary spermatocytes causing meiotic drive, possibly by interfering with normal casein kinase 2 activity. The polypeptide is Stellate protein CG33237 (Ste:CG33237) (Drosophila melanogaster (Fruit fly)).